A 98-amino-acid polypeptide reads, in one-letter code: Keratin-associated protein 3-3 (98 aa).

A run of 3 repeats spans residues 3 to 7, 47 to 51, and 89 to 93. The interval 3–59 is 3 X 5 AA repeats of C-C-X(3); it reads CCASRGCSVPTGPATTICSSDKSCRCGVCLPSTCPHTVWLLEPTCCDNCPPPCHIPQ.

The protein belongs to the KRTAP type 3 family. As to quaternary structure, interacts with hair keratins. As to expression, localized to the upper cortex of the hair shaft.

In the hair cortex, hair keratin intermediate filaments are embedded in an interfilamentous matrix, consisting of hair keratin-associated proteins (KRTAP), which are essential for the formation of a rigid and resistant hair shaft through their extensive disulfide bond cross-linking with abundant cysteine residues of hair keratins. The matrix proteins include the high-sulfur and high-glycine-tyrosine keratins. The chain is Keratin-associated protein 3-3 (KRTAP3-3) from Homo sapiens (Human).